A 149-amino-acid chain; its full sequence is D-aminoacyl-tRNA deacylase (149 aa).

Residues 137-138 (GP) carry the Gly-cisPro motif, important for rejection of L-amino acids motif.

Belongs to the DTD family. Homodimer.

It localises to the cytoplasm. The enzyme catalyses glycyl-tRNA(Ala) + H2O = tRNA(Ala) + glycine + H(+). It carries out the reaction a D-aminoacyl-tRNA + H2O = a tRNA + a D-alpha-amino acid + H(+). Its function is as follows. An aminoacyl-tRNA editing enzyme that deacylates mischarged D-aminoacyl-tRNAs. Also deacylates mischarged glycyl-tRNA(Ala), protecting cells against glycine mischarging by AlaRS. Acts via tRNA-based rather than protein-based catalysis; rejects L-amino acids rather than detecting D-amino acids in the active site. By recycling D-aminoacyl-tRNA to D-amino acids and free tRNA molecules, this enzyme counteracts the toxicity associated with the formation of D-aminoacyl-tRNA entities in vivo and helps enforce protein L-homochirality. The protein is D-aminoacyl-tRNA deacylase of Paracoccus denitrificans (strain Pd 1222).